Reading from the N-terminus, the 452-residue chain is Methionine aminopeptidase 2 (452 aa).

The interval 1–96 is disordered; the sequence is MAVQALPEIN…VPLSTLFPNN (96 aa). Low complexity predominate over residues 18–35; that stretch reads GAANAAAKGQAAQGTAGN. The span at 36-53 shows a compositional bias: acidic residues; it reads DDAENDESDEDKEDEQEV. The segment covering 62-77 has biased composition (basic residues); the sequence is GKKKKKKTKKKKKKGT. Residue His-202 participates in substrate binding. Positions 222, 233, and 302 each coordinate a divalent metal cation. A substrate-binding site is contributed by His-310. A divalent metal cation contacts are provided by Glu-338 and Glu-433.

This sequence belongs to the peptidase M24A family. Methionine aminopeptidase eukaryotic type 2 subfamily. The cofactor is Co(2+). Requires Zn(2+) as cofactor. Mn(2+) serves as cofactor. It depends on Fe(2+) as a cofactor.

The protein localises to the cytoplasm. The catalysed reaction is Release of N-terminal amino acids, preferentially methionine, from peptides and arylamides.. Its function is as follows. Cotranslationally removes the N-terminal methionine from nascent proteins. The N-terminal methionine is often cleaved when the second residue in the primary sequence is small and uncharged (Met-Ala-, Cys, Gly, Pro, Ser, Thr, or Val). This chain is Methionine aminopeptidase 2, found in Coccidioides posadasii (strain C735) (Valley fever fungus).